Consider the following 257-residue polypeptide: Thiazole synthase (257 aa).

The Schiff-base intermediate with DXP role is filled by lysine 95. 1-deoxy-D-xylulose 5-phosphate is bound by residues glycine 156, 182-183 (AG), and 204-205 (NT).

Belongs to the ThiG family. As to quaternary structure, homotetramer. Forms heterodimers with either ThiH or ThiS.

Its subcellular location is the cytoplasm. It catalyses the reaction [ThiS sulfur-carrier protein]-C-terminal-Gly-aminoethanethioate + 2-iminoacetate + 1-deoxy-D-xylulose 5-phosphate = [ThiS sulfur-carrier protein]-C-terminal Gly-Gly + 2-[(2R,5Z)-2-carboxy-4-methylthiazol-5(2H)-ylidene]ethyl phosphate + 2 H2O + H(+). It functions in the pathway cofactor biosynthesis; thiamine diphosphate biosynthesis. Catalyzes the rearrangement of 1-deoxy-D-xylulose 5-phosphate (DXP) to produce the thiazole phosphate moiety of thiamine. Sulfur is provided by the thiocarboxylate moiety of the carrier protein ThiS. In vitro, sulfur can be provided by H(2)S. This Vibrio vulnificus (strain CMCP6) protein is Thiazole synthase.